A 554-amino-acid chain; its full sequence is Dihydroxy-acid dehydratase (554 aa).

Residue Asp78 coordinates Mg(2+). Residue Cys119 participates in [2Fe-2S] cluster binding. Residues Asp120 and Lys121 each coordinate Mg(2+). Lys121 carries the post-translational modification N6-carboxylysine. Cys191 is a [2Fe-2S] cluster binding site. Residue Glu442 coordinates Mg(2+). Ser468 functions as the Proton acceptor in the catalytic mechanism.

This sequence belongs to the IlvD/Edd family. As to quaternary structure, homodimer. [2Fe-2S] cluster is required as a cofactor. Requires Mg(2+) as cofactor.

It carries out the reaction (2R)-2,3-dihydroxy-3-methylbutanoate = 3-methyl-2-oxobutanoate + H2O. It catalyses the reaction (2R,3R)-2,3-dihydroxy-3-methylpentanoate = (S)-3-methyl-2-oxopentanoate + H2O. It participates in amino-acid biosynthesis; L-isoleucine biosynthesis; L-isoleucine from 2-oxobutanoate: step 3/4. Its pathway is amino-acid biosynthesis; L-valine biosynthesis; L-valine from pyruvate: step 3/4. Functions in the biosynthesis of branched-chain amino acids. Catalyzes the dehydration of (2R,3R)-2,3-dihydroxy-3-methylpentanoate (2,3-dihydroxy-3-methylvalerate) into 2-oxo-3-methylpentanoate (2-oxo-3-methylvalerate) and of (2R)-2,3-dihydroxy-3-methylbutanoate (2,3-dihydroxyisovalerate) into 2-oxo-3-methylbutanoate (2-oxoisovalerate), the penultimate precursor to L-isoleucine and L-valine, respectively. This is Dihydroxy-acid dehydratase from Hydrogenobaculum sp. (strain Y04AAS1).